The following is a 499-amino-acid chain: MLSLIVACLVLPLICYKLVRSYNQSREDEQFAASKGCQPPRKWSAKWPLGLDMLVKAVRYEKRQQILQLFLEEVAASGSTFEQNLLFARGIDTVEPRNIEAILSTQFTGSGIFTQDGPQWKHSRELLRPQFMTNRFRNFEQIRHAVNNLISSVPDSGVVDLQPLFFRLTFETTLFLLFGHYLPSLKSEGITGHESQFANAFNLGQDYLAQRGRLGDLYWLLGGREFKDACKVCHDFIDNAVQKALKHSSREKKVSDEEKETYVFIDALVQETREPSVLRDQCLNILLAGRDTTACCLTWTLRLLVQHPDVLSKLRDEVRDTIGMGPDAPDPTISQVKKLSYLSLVIKEVLRLYPSVPVNSRAAVKTTTLPTGGGPDGSAPLLVRRGEAVGYCVYAMHRRKDIYGPDADCFRPERWENDALKDVGYGYLPFNGGPRICLGQEFALLEVGYTVVRLLQTFETIEEAETKVPGAPLGEEKQTLTLVVSSGEGCWVSMKKGTK.

An N-terminal signal peptide occupies residues Met1–Ser21. N-linked (GlcNAc...) asparagine glycosylation occurs at Asn23. Residue Cys437 participates in heme binding.

The protein belongs to the cytochrome P450 family. Heme is required as a cofactor.

In terms of biological role, together with an NADPH cytochrome P450 the enzyme system catalyzes the terminal hydroxylation as the first step in the assimilation of alkanes and fatty acids. This is Cytochrome P450 ARB_01131 from Arthroderma benhamiae (strain ATCC MYA-4681 / CBS 112371) (Trichophyton mentagrophytes).